The following is a 602-amino-acid chain: Basic-leucine zipper transcription factor B (602 aa).

Positions 1–10 (MNQFYQSTTG) are enriched in polar residues. Residues 1–128 (MNQFYQSTTG…NRVNQNLASR (128 aa)) are disordered. Composition is skewed to low complexity over residues 11–54 (GQQN…TSTS) and 66–102 (QQQI…YNGD). Positions 58–94 (KNKDNQSKQQQIQQQQIQQQQQQQQQQQQQIQQQSVD) form a coiled coil. The bZIP domain occupies 113-176 (ENKKNRNRVN…GVEIMKPDPA (64 aa)). Positions 115–135 (KKNRNRVNQNLASRNYRQRKK) are basic motif. The leucine-zipper stretch occupies residues 138-145 (IKEIEEKL). Disordered regions lie at residues 328–401 (TNLS…QNNN) and 525–602 (QNQT…PSRQ). Low complexity-rich tracts occupy residues 336 to 350 (PNPT…TQST), 358 to 401 (LTLL…QNNN), and 525 to 592 (QNQT…SSPY). Residues 509–552 (TFSQQTQQLQQAQLQLQNQTKQQQQQLQNNNNNNNNNNNNNNSF) are a coiled coil. Polar residues predominate over residues 593–602 (NHHQQQPSRQ).

It belongs to the bZIP family. As to quaternary structure, binds DNA as a dimer. Heterodimerizes with dimA; in vitro. Also able to form homodimer; in vitro.

It is found in the nucleus. In terms of biological role, transcriptional regulator involved in DIF-1 signaling. DIF-1 (Differentiation Inducing Factor-1) is a signal molecule involved in the differentiation of pstO (prestalk-O) cells. May be a direct activator of ecmA. The sequence is that of Basic-leucine zipper transcription factor B (dimB) from Dictyostelium discoideum (Social amoeba).